A 364-amino-acid chain; its full sequence is D-alanine--D-alanine ligase A (364 aa).

Positions 145 to 348 constitute an ATP-grasp domain; that stretch reads KRLLRDAGLN…YTDLITRLIE (204 aa). ATP is bound at residue 175–230; sequence ESKLGLPLFVKPANQGSSVGVSKVTSEEQYAIAVDLAFEFDHKVIVEQGIKGREIE. Residues Asp-302, Glu-315, and Asn-317 each coordinate Mg(2+).

Belongs to the D-alanine--D-alanine ligase family. It depends on Mg(2+) as a cofactor. The cofactor is Mn(2+).

It localises to the cytoplasm. It carries out the reaction 2 D-alanine + ATP = D-alanyl-D-alanine + ADP + phosphate + H(+). The protein operates within cell wall biogenesis; peptidoglycan biosynthesis. Cell wall formation. The sequence is that of D-alanine--D-alanine ligase A (ddlA) from Escherichia coli O157:H7.